The following is a 488-amino-acid chain: Ribulose bisphosphate carboxylase large chain (488 aa).

Substrate is bound by residues asparagine 127 and threonine 177. Residue lysine 179 is the Proton acceptor of the active site. Lysine 181 contributes to the substrate binding site. Residues lysine 205, aspartate 207, and glutamate 208 each coordinate Mg(2+). N6-carboxylysine is present on lysine 205. The active-site Proton acceptor is the histidine 297. Arginine 298, histidine 330, and serine 382 together coordinate substrate.

The protein belongs to the RuBisCO large chain family. Type I subfamily. Heterohexadecamer of 8 large chains and 8 small chains. The cofactor is Mg(2+).

It is found in the plastid. The protein localises to the chloroplast. The enzyme catalyses 2 (2R)-3-phosphoglycerate + 2 H(+) = D-ribulose 1,5-bisphosphate + CO2 + H2O. The catalysed reaction is D-ribulose 1,5-bisphosphate + O2 = 2-phosphoglycolate + (2R)-3-phosphoglycerate + 2 H(+). Functionally, ruBisCO catalyzes two reactions: the carboxylation of D-ribulose 1,5-bisphosphate, the primary event in carbon dioxide fixation, as well as the oxidative fragmentation of the pentose substrate in the photorespiration process. Both reactions occur simultaneously and in competition at the same active site. The chain is Ribulose bisphosphate carboxylase large chain from Olisthodiscus luteus (Marine phytoflagellate).